Consider the following 354-residue polypeptide: Serine/threonine-protein kinase-transforming protein mos (354 aa).

The 277-residue stretch at V74–R350 folds into the Protein kinase domain. Residues L80–V88 and K101 each bind ATP. D209 (proton acceptor) is an active-site residue.

The protein belongs to the protein kinase superfamily. Ser/Thr protein kinase family.

The catalysed reaction is L-seryl-[protein] + ATP = O-phospho-L-seryl-[protein] + ADP + H(+). It carries out the reaction L-threonyl-[protein] + ATP = O-phospho-L-threonyl-[protein] + ADP + H(+). This chain is Serine/threonine-protein kinase-transforming protein mos (V-MOS), found in Moloney murine sarcoma virus (strain ts110) (MoMSV).